We begin with the raw amino-acid sequence, 106 residues long: UPF0145 protein Athe_0545 (106 aa).

Belongs to the UPF0145 family.

The chain is UPF0145 protein Athe_0545 from Caldicellulosiruptor bescii (strain ATCC BAA-1888 / DSM 6725 / KCTC 15123 / Z-1320) (Anaerocellum thermophilum).